We begin with the raw amino-acid sequence, 426 residues long: 3-phosphoshikimate 1-carboxyvinyltransferase (426 aa).

K21, S22, and R26 together coordinate 3-phosphoshikimate. K21 lines the phosphoenolpyruvate pocket. Residues G91 and R119 each coordinate phosphoenolpyruvate. 3-phosphoshikimate-binding residues include S162, S163, Q164, S190, D304, and K331. Q164 lines the phosphoenolpyruvate pocket. D304 acts as the Proton acceptor in catalysis. The phosphoenolpyruvate site is built by R335, R377, and K403.

Belongs to the EPSP synthase family. Monomer.

The protein localises to the cytoplasm. The catalysed reaction is 3-phosphoshikimate + phosphoenolpyruvate = 5-O-(1-carboxyvinyl)-3-phosphoshikimate + phosphate. It participates in metabolic intermediate biosynthesis; chorismate biosynthesis; chorismate from D-erythrose 4-phosphate and phosphoenolpyruvate: step 6/7. Its function is as follows. Catalyzes the transfer of the enolpyruvyl moiety of phosphoenolpyruvate (PEP) to the 5-hydroxyl of shikimate-3-phosphate (S3P) to produce enolpyruvyl shikimate-3-phosphate and inorganic phosphate. This is 3-phosphoshikimate 1-carboxyvinyltransferase from Clostridium kluyveri (strain ATCC 8527 / DSM 555 / NBRC 12016 / NCIMB 10680 / K1).